The following is a 249-amino-acid chain: Photosystem I-associated linker protein CpcL (249 aa).

A PBS-linker domain is found at 11–189 (VSQNQRVTNY…PRYGADHREK (179 aa)). Residues 223 to 247 (VVLYVGGALVSLGIIAVALSAWGII) form a helical membrane-spanning segment.

This sequence belongs to the phycobilisome linker protein family. In terms of assembly, part of a specialized phycobilisome (PBS), a structure that is usually composed of two distinct substructures: a core complex and a number of rods radiating from the core. This protein is part of a core-less PBS rod (called CpcL-PBS) with on average 5 stacked phycocyanin hexamers (PC, CpcA and CpcB). Linker CpcL connects the PC stack to the thylakoid, the hexamers are linked by 1 copy of CpcC1, 3 copies of CpcC2 and the stack is terminated by a single copy of CpcD. Ferredoxin--NADP reductase (petH) is also part of the complex. CpcL-PBS has no central core proteins (allophycocyanin ApcA, ApcB) nor phycobiliprotein ApcE.

The protein localises to the cellular thylakoid membrane. Rod linker protein, associated with phycocyanin. Linker polypeptides determine the state of aggregation and the location of the disk-shaped phycobiliprotein units within the phycobilisome and modulate their spectroscopic properties in order to mediate a directed and optimal energy transfer. Plays a role in energy transfer from the phycobilisome to photosystem I (PSI). Although able to transfer energy to both photosystems, this is predominantly a PSI antenna. The chain is Photosystem I-associated linker protein CpcL from Synechocystis sp. (strain ATCC 27184 / PCC 6803 / Kazusa).